Here is an 837-residue protein sequence, read N- to C-terminus: MPNSAGVEVARISVKVSPNTKEFRRELKTELEKIERELKGDVEINGHLDAAQAKADFKRMMMQLKTEAAKGVHVPVDVTVDKKSKKGGLLGGLLGGSRGLGDLGDDAEKASSQVQHLGKSFLGLTRAAWIGVGIVAVAAPLVGIVAGLLAGLPSLLSAFGAGAGVVALGMDGIKAAASTLAPTLETVKAAVSSTFQQGLTPVFQQLGPMLTAITPNLQNVASGLVNMAGSITDVITQAPGLQQIQNILTKTGEFFTGLGPVLATGTQAFLTLSNAGANSFGTLLAPLQEFTNGFNDMVNRVTSNGVFEGAMQGLSQTLGSVLNLFNRLMESGLQAMGQLGGPLSTFINGFGDLFVSLMPALTSVSGLIGNVLGTLGTQLAPIVTALTPAFQTLASTLGTMLTGALQALGPILTQVATLIGTTLNTALQALQPMLPSLMQSFQQISDVLVTSLAPHIPALATALGQVAGAVLQLAPTIISTLVPAFVQLVPKVAELVPTIVNLVQSFANLMPVVLPLAQALVSVAGAVIQVGVSIGGALIGALANLTEIISNVIKKVSEWVSSFSSGAQQIAAKAAELPGMIQSALANLMAIGLQAGKDLVQGLINGIGGMVSAAVNKAKELASSVAGAVKGFLGIESPSKLFTEYGQFTAEGFGNGMEAGFKPVIERAKDLAAELSRAMESGTDPSGILAGLDQNELKQMLAALEEERKRLKVEKNGIPKGDKAGREALQNQLDQIQAQKDILSYQRDRIKNESEYGDMAGEDPLVKAASGLMSAPVDFAKATGKQFLSDIGISGDGFISKAITEGIQYIFQIGSVDEALSIKDREESKNALSVVGR.

This chain is Minor tail protein Gp26 (26), found in Mycobacterium phage L5 (Mycobacteriophage L5).